A 422-amino-acid polypeptide reads, in one-letter code: Putative polyketide beta-ketoacyl synthase 1 (422 aa).

Residues 2 to 416 (SRRVVVTGIG…GFQSAVVLTG (415 aa)) enclose the Ketosynthase family 3 (KS3) domain. Catalysis depends on for beta-ketoacyl synthase activity residues cysteine 169, histidine 309, and histidine 346.

The protein belongs to the thiolase-like superfamily. Beta-ketoacyl-ACP synthases family.

In terms of biological role, involved in developmentally regulated synthesis of a compound biosynthetically related to polyketide antibiotics which is essential for spore color in Streptomyces halstedii. The chain is Putative polyketide beta-ketoacyl synthase 1 (sch1) from Streptomyces halstedii.